Here is a 355-residue protein sequence, read N- to C-terminus: UDP-N-acetylglucosamine--N-acetylmuramyl-(pentapeptide) pyrophosphoryl-undecaprenol N-acetylglucosamine transferase (355 aa).

Residues 15 to 17, Asn127, Arg163, Ser191, Ile244, 263 to 268, and Gln288 contribute to the UDP-N-acetyl-alpha-D-glucosamine site; these read TGG and ALTVSE.

Belongs to the glycosyltransferase 28 family. MurG subfamily.

It is found in the cell inner membrane. The catalysed reaction is di-trans,octa-cis-undecaprenyl diphospho-N-acetyl-alpha-D-muramoyl-L-alanyl-D-glutamyl-meso-2,6-diaminopimeloyl-D-alanyl-D-alanine + UDP-N-acetyl-alpha-D-glucosamine = di-trans,octa-cis-undecaprenyl diphospho-[N-acetyl-alpha-D-glucosaminyl-(1-&gt;4)]-N-acetyl-alpha-D-muramoyl-L-alanyl-D-glutamyl-meso-2,6-diaminopimeloyl-D-alanyl-D-alanine + UDP + H(+). It functions in the pathway cell wall biogenesis; peptidoglycan biosynthesis. Functionally, cell wall formation. Catalyzes the transfer of a GlcNAc subunit on undecaprenyl-pyrophosphoryl-MurNAc-pentapeptide (lipid intermediate I) to form undecaprenyl-pyrophosphoryl-MurNAc-(pentapeptide)GlcNAc (lipid intermediate II). The sequence is that of UDP-N-acetylglucosamine--N-acetylmuramyl-(pentapeptide) pyrophosphoryl-undecaprenol N-acetylglucosamine transferase from Citrobacter koseri (strain ATCC BAA-895 / CDC 4225-83 / SGSC4696).